A 111-amino-acid chain; its full sequence is TPR repeat-containing protein associated with Hsp90 (111 aa).

N-acetylserine is present on Ser2. 2 TPR repeats span residues 4-37 (FEKQ…QPQN) and 39-71 (VGYS…TSTA).

In terms of assembly, component of the R2TP complex composed at least of RVB1, RVB2, TAH1 and PIH1. Also interacts with HSP90.

It is found in the cytoplasm. Its subcellular location is the nucleus. This chain is TPR repeat-containing protein associated with Hsp90 (TAH1), found in Saccharomyces cerevisiae (strain ATCC 204508 / S288c) (Baker's yeast).